The chain runs to 172 residues: Major exported protein (172 aa).

This sequence belongs to the hcp1 family.

The protein resides in the secreted. This chain is Major exported protein (hcpA), found in Pseudomonas aeruginosa (strain ATCC 15692 / DSM 22644 / CIP 104116 / JCM 14847 / LMG 12228 / 1C / PRS 101 / PAO1).